A 110-amino-acid chain; its full sequence is Small ribosomal subunit protein bS16 (110 aa).

The segment at Lys84 to Lys110 is disordered.

This sequence belongs to the bacterial ribosomal protein bS16 family.

This is Small ribosomal subunit protein bS16 from Rhodopseudomonas palustris (strain BisB18).